The sequence spans 617 residues: Secretogranin-2 (617 aa).

A signal peptide spans 1–27 (MAEAKTHWLGAALSLIPLIFLISGAEA). A propeptide spanning residues 28-30 (ASF) is cleaved from the precursor. A disordered region spans residues 120-143 (QAENEPQSAPKENKPYALNSEKNF). Tyr-151 is modified (sulfotyrosine). Ser-174 bears the Phosphoserine mark. The O-glycosylated at one site stretch occupies residues 182-200 (TNEIVEEQYTPQSLATLES). Composition is skewed to basic and acidic residues over residues 257–284 (IESQ…EMKR) and 293–302 (EDLRKESKDQ). A disordered region spans residues 257–302 (IESQTQEEVRDSKENIEKNEQINDEMKRSGQLGIQEEDLRKESKDQ). Ser-268 is modified (phosphoserine). 4 positions are modified to phosphoserine: Ser-432, Ser-532, Ser-555, and Ser-556. A disordered region spans residues 552–583 (NQGSSQETDKLAPVSKRFPVGPPKNDDTPNRQ).

It belongs to the chromogranin/secretogranin protein family. Interacts with Secretogranin III/SCG3. In terms of processing, O-glycosylated.

The protein localises to the secreted. Neuroendocrine protein of the granin family that regulates the biogenesis of secretory granules. The polypeptide is Secretogranin-2 (SCG2) (Homo sapiens (Human)).